We begin with the raw amino-acid sequence, 466 residues long: Cysteine--tRNA ligase (466 aa).

Cysteine 27 contacts Zn(2+). Residues 29 to 39 (PTVYNFFHIGN) carry the 'HIGH' region motif. Residues cysteine 207, histidine 232, and glutamate 236 each contribute to the Zn(2+) site. The short motif at 264–268 (KMSKS) is the 'KMSKS' region element. Lysine 267 contributes to the ATP binding site.

The protein belongs to the class-I aminoacyl-tRNA synthetase family. As to quaternary structure, monomer. Zn(2+) is required as a cofactor.

It is found in the cytoplasm. The enzyme catalyses tRNA(Cys) + L-cysteine + ATP = L-cysteinyl-tRNA(Cys) + AMP + diphosphate. The sequence is that of Cysteine--tRNA ligase from Clostridium beijerinckii (strain ATCC 51743 / NCIMB 8052) (Clostridium acetobutylicum).